The sequence spans 146 residues: MKLHELKPSEGSRKERNRVGRGTGSGNGKTSGRGHKGQKARSGGGVRLGFEGGQLPLFRRIPKRGFTNINRKEFAIVNLDVLNRFEDGTEVTPELLVETGIIRNEKSGIKILSNGNIEKKLTVKANKFSAAAKEAIEAAGGKTEVI.

Basic and acidic residues predominate over residues 1–18 (MKLHELKPSEGSRKERNR). A disordered region spans residues 1–50 (MKLHELKPSEGSRKERNRVGRGTGSGNGKTSGRGHKGQKARSGGGVRLGF). Over residues 21-31 (RGTGSGNGKTS) the composition is skewed to gly residues.

The protein belongs to the universal ribosomal protein uL15 family. As to quaternary structure, part of the 50S ribosomal subunit.

Binds to the 23S rRNA. The protein is Large ribosomal subunit protein uL15 of Listeria monocytogenes serotype 4b (strain CLIP80459).